The following is a 405-amino-acid chain: Imidazolonepropionase (405 aa).

Fe(3+) contacts are provided by His70 and His72. Zn(2+) is bound by residues His70 and His72. 4-imidazolone-5-propanoate contacts are provided by Arg79, Tyr142, and His175. Tyr142 serves as a coordination point for N-formimidoyl-L-glutamate. His240 contributes to the Fe(3+) binding site. His240 contacts Zn(2+). Gln243 is a binding site for 4-imidazolone-5-propanoate. Asp315 contacts Fe(3+). A Zn(2+)-binding site is contributed by Asp315. N-formimidoyl-L-glutamate is bound by residues Asn317 and Gly319. Ser320 contacts 4-imidazolone-5-propanoate.

This sequence belongs to the metallo-dependent hydrolases superfamily. HutI family. Requires Zn(2+) as cofactor. Fe(3+) serves as cofactor.

The protein resides in the cytoplasm. It carries out the reaction 4-imidazolone-5-propanoate + H2O = N-formimidoyl-L-glutamate. Its pathway is amino-acid degradation; L-histidine degradation into L-glutamate; N-formimidoyl-L-glutamate from L-histidine: step 3/3. Functionally, catalyzes the hydrolytic cleavage of the carbon-nitrogen bond in imidazolone-5-propanoate to yield N-formimidoyl-L-glutamate. It is the third step in the universal histidine degradation pathway. The polypeptide is Imidazolonepropionase (Ruegeria sp. (strain TM1040) (Silicibacter sp.)).